Consider the following 225-residue polypeptide: Transcriptional regulatory protein AfsQ1 (225 aa).

Positions 3 to 116 (SLLLIEDDDA…VLDARIRAVL (114 aa)) constitute a Response regulatory domain. Aspartate 52 carries the 4-aspartylphosphate modification. Positions 124 to 223 (TDSASFGSLV…VRGVGYRLDP (100 aa)) form a DNA-binding region, ompR/PhoB-type.

Post-translationally, phosphorylated by AfsQ2.

The protein resides in the cytoplasm. Its subcellular location is the nucleoid. Forms part of a two-component regulatory system AfsQ1/AfsQ2 involved in secondary metabolism. The sequence is that of Transcriptional regulatory protein AfsQ1 from Streptomyces coelicolor (strain ATCC BAA-471 / A3(2) / M145).